A 151-amino-acid polypeptide reads, in one-letter code: Flagellar assembly factor FliW (151 aa).

It belongs to the FliW family. In terms of assembly, interacts with translational regulator CsrA and flagellin(s).

The protein localises to the cytoplasm. Functionally, acts as an anti-CsrA protein, binds CsrA and prevents it from repressing translation of its target genes, one of which is flagellin. Binds to flagellin and participates in the assembly of the flagellum. The chain is Flagellar assembly factor FliW from Natranaerobius thermophilus (strain ATCC BAA-1301 / DSM 18059 / JW/NM-WN-LF).